Reading from the N-terminus, the 111-residue chain is Phosphoribosyl-ATP pyrophosphatase (111 aa).

It belongs to the PRA-PH family.

Its subcellular location is the cytoplasm. It carries out the reaction 1-(5-phospho-beta-D-ribosyl)-ATP + H2O = 1-(5-phospho-beta-D-ribosyl)-5'-AMP + diphosphate + H(+). The protein operates within amino-acid biosynthesis; L-histidine biosynthesis; L-histidine from 5-phospho-alpha-D-ribose 1-diphosphate: step 2/9. In Pseudomonas putida (strain ATCC 700007 / DSM 6899 / JCM 31910 / BCRC 17059 / LMG 24140 / F1), this protein is Phosphoribosyl-ATP pyrophosphatase.